The following is a 121-amino-acid chain: Small ribosomal subunit protein uS13 (121 aa).

The interval 93 to 121 (RGLPMRGQRTRTNARTRKGPRKGAAALKK) is disordered.

The protein belongs to the universal ribosomal protein uS13 family. As to quaternary structure, part of the 30S ribosomal subunit. Forms a loose heterodimer with protein S19. Forms two bridges to the 50S subunit in the 70S ribosome.

In terms of biological role, located at the top of the head of the 30S subunit, it contacts several helices of the 16S rRNA. In the 70S ribosome it contacts the 23S rRNA (bridge B1a) and protein L5 of the 50S subunit (bridge B1b), connecting the 2 subunits; these bridges are implicated in subunit movement. Contacts the tRNAs in the A and P-sites. This is Small ribosomal subunit protein uS13 from Paracidovorax citrulli (strain AAC00-1) (Acidovorax citrulli).